The sequence spans 105 residues: Putative membrane protein insertion efficiency factor (105 aa).

A disordered region spans residues 68–105; it reads FHPGGLDPVPPRRNESGTEISDARPGSDGEASPGAPGL. Positions 77 to 94 are enriched in basic and acidic residues; the sequence is PPRRNESGTEISDARPGS.

The protein belongs to the UPF0161 family.

It localises to the cell membrane. Functionally, could be involved in insertion of integral membrane proteins into the membrane. This chain is Putative membrane protein insertion efficiency factor, found in Thermobifida fusca (strain YX).